A 960-amino-acid chain; its full sequence is Gamma-aminobutyric acid type B receptor subunit 1 (960 aa).

The signal sequence occupies residues 1–19; the sequence is MLLLLLVPLFLRPLGAGGA. At 20-590 the chain is on the extracellular side; sequence QTPNATSEGC…KTFRFLSQKL (571 aa). N-linked (GlcNAc...) asparagine glycans are attached at residues Asn-23 and Asn-83. 2 consecutive Sushi domains span residues 29–95 and 97–158; these read CQII…PSRC and RICS…HCQV. 3 disulfides stabilise this stretch: Cys-99-Cys-144, Cys-130-Cys-156, and Cys-219-Cys-245. Ser-246, Ser-269, His-286, and Tyr-366 together coordinate 4-aminobutanoate. Cys-375 and Cys-409 are disulfide-bonded. N-linked (GlcNAc...) asparagine glycans are attached at residues Asn-408 and Asn-439. Position 465 (Glu-465) interacts with 4-aminobutanoate. N-linked (GlcNAc...) asparagine glycans are attached at residues Asn-481, Asn-501, and Asn-513. Residues 591–611 traverse the membrane as a helical segment; the sequence is FISVSVLSSLGIVLAVVCLSF. At 612-630 the chain is on the cytoplasmic side; sequence NIYNSHVRYIQNSQPNLNN. The chain crosses the membrane as a helical span at residues 631-651; the sequence is LTAVGCSLALAAVFPLGLDGY. Residues 652–666 are Extracellular-facing; sequence HIGRSQFPFVCQARL. The helical transmembrane segment at 667–687 threads the bilayer; that stretch reads WLLGLGFSLGYGSMFTKIWWV. Topologically, residues 688 to 709 are cytoplasmic; the sequence is HTVFTKKEEKKEWRKTLEPWKL. A helical membrane pass occupies residues 710-730; that stretch reads YATVGLLVGMDVLTLAIWQIV. Over 731–767 the chain is Extracellular; that stretch reads DPLHRTIETFAKEEPKEDIDVSILPQLEHCSSKKMNT. The helical transmembrane segment at 768–788 threads the bilayer; it reads WLGIFYGYKGLLLLLGIFLAY. Over 789–803 the chain is Cytoplasmic; it reads ETKSVSTEKINDHRA. The chain crosses the membrane as a helical span at residues 804–824; that stretch reads VGMAIYNVAVLCLITAPVTMI. The Extracellular portion of the chain corresponds to 825-832; it reads LSSQQDAA. A helical membrane pass occupies residues 833-853; the sequence is FAFASLAIVFSSYITLVVLFV. At 854–960 the chain is on the cytoplasmic side; sequence PKMRRLITRG…DGSRVHLLYK (107 aa). Positions 866 to 879 are enriched in polar residues; it reads QSETQDTMKTGSST. Disordered stretches follow at residues 866-891 and 908-960; these read QSET…RLLE and VSEL…LLYK. A coiled-coil region spans residues 870-924; sequence QDTMKTGSSTNNNEEEKSRLLEKENRELEKIIAEKEERVSELRHQLQSRQQLRSR. Residue Thr-872 is modified to Phosphothreonine. The tract at residues 887 to 915 is interaction with ATF4; the sequence is SRLLEKENRELEKIIAEKEERVSELRHQL. Thr-929 carries the post-translational modification Phosphothreonine.

This sequence belongs to the G-protein coupled receptor 3 family. GABA-B receptor subfamily. In terms of assembly, heterodimer of GABBR1 and GABBR2. Homodimers may form, but are inactive. Interacts (via C-terminus) with ATF4 (via leucine zipper domain). Interacts with JAKMIP1. Ubiquitously expressed in tissues including the forebrain, cerebellum, eye, atrium, ventricle, lung, stomach, small intestine, colon, liver, spleen, kidney, urinary bladder and skeletal muscle. Expressed at low levels in testis, and more highly in brain regions. Expression is high the brain regions including cerebral cortical layers, with higher expression in VIb than in the II-V layers, pyramidal CA1-CA3 cell layers and granular cell layers of the hippocampus, granular cell layers of the dentate gyrus, including the caudate, putamen, nucleus accumbens and olfactory tubercle, the granular layer cell layers of the medial habenula, in the cerebellum, predominantly in Purkinje cells, and in the granule cell layer. Also expressed in areas of the brain including the medial geniculate nucleus, substantia nigra, pars compacta, the ventral tegmental area, and in several thalamic, amygdaloid and hypothalamic nuclei, such as the arcuate nucleus of the hypothalamus and mammilary bodies of the hypothalamus. Expressed in the amacrine cell of the retina. In terms of tissue distribution, expressed in the brain, spinal cord, stomach, testis, adrenal gland, pituitary, spleen and prostate. As to expression, expressed in the brain, spinal cord, stomach, testis, kidney and liver. Ubiquitously expressed. In terms of tissue distribution, expressed in the forebrain, cerebellum, eye, kidney and urinary bladder. As to expression, ubiquitously expressed with high expression in the pyramidal CA1-CA3 cell layers of the hippocampus, the granule cell layers of the dentate gyrus and olfactory tubercle, the whole cortex, and Purkinje cells of the cerebellum. Moderate expression in the granule cell layer of the cerebellum.

Its subcellular location is the cell membrane. It is found in the postsynaptic cell membrane. It localises to the cell projection. The protein localises to the dendrite. The protein resides in the perikaryon. Component of a heterodimeric G-protein coupled receptor for GABA, formed by GABBR1 and GABBR2. Within the heterodimeric GABA receptor, only GABBR1 seems to bind agonists, while GABBR2 mediates coupling to G proteins. Ligand binding causes a conformation change that triggers signaling via guanine nucleotide-binding proteins (G proteins) and modulates the activity of down-stream effectors, such as adenylate cyclase. Signaling inhibits adenylate cyclase, stimulates phospholipase A2, activates potassium channels, inactivates voltage-dependent calcium-channels and modulates inositol phospholipid hydrolysis. Calcium is required for high affinity binding to GABA. Plays a critical role in the fine-tuning of inhibitory synaptic transmission. Pre-synaptic GABA receptor inhibits neurotransmitter release by down-regulating high-voltage activated calcium channels, whereas postsynaptic GABA receptor decreases neuronal excitability by activating a prominent inwardly rectifying potassium (Kir) conductance that underlies the late inhibitory postsynaptic potentials. Not only implicated in synaptic inhibition but also in hippocampal long-term potentiation, slow wave sleep, muscle relaxation and antinociception. This is Gamma-aminobutyric acid type B receptor subunit 1 (Gabbr1) from Rattus norvegicus (Rat).